A 388-amino-acid chain; its full sequence is Succinyl-diaminopimelate desuccinylase (388 aa).

Position 84 (His84) interacts with Zn(2+). Asp86 is a catalytic residue. Asp115 is a Zn(2+) binding site. Catalysis depends on Glu146, which acts as the Proton acceptor. 3 residues coordinate Zn(2+): Glu147, Glu175, and His360.

Belongs to the peptidase M20A family. DapE subfamily. As to quaternary structure, homodimer. Zn(2+) is required as a cofactor. Requires Co(2+) as cofactor.

The enzyme catalyses N-succinyl-(2S,6S)-2,6-diaminopimelate + H2O = (2S,6S)-2,6-diaminopimelate + succinate. The protein operates within amino-acid biosynthesis; L-lysine biosynthesis via DAP pathway; LL-2,6-diaminopimelate from (S)-tetrahydrodipicolinate (succinylase route): step 3/3. Functionally, catalyzes the hydrolysis of N-succinyl-L,L-diaminopimelic acid (SDAP), forming succinate and LL-2,6-diaminopimelate (DAP), an intermediate involved in the bacterial biosynthesis of lysine and meso-diaminopimelic acid, an essential component of bacterial cell walls. The sequence is that of Succinyl-diaminopimelate desuccinylase from Helicobacter pylori (strain G27).